The primary structure comprises 113 residues: MKLLTTICRLKLEKMYSKTNTSSTIFEKARHGTEKISTARSEGHHITFSRWKSCTAIGGRCKNQCDDSEFRISYCARPTTHCCVTECDPTDPNNWIPKDSVGTQEWYPKDSRH.

Disulfide bonds link C54-C82, C61-C75, and C65-C83.

This sequence belongs to the beta-defensin family.

It localises to the secreted. Its function is as follows. Has antibacterial activity. In Homo sapiens (Human), this protein is Beta-defensin 112 (DEFB112).